Consider the following 459-residue polypeptide: Putrescine aminotransferase (459 aa).

Residues 150–151 and glutamine 274 each bind pyridoxal 5'-phosphate; that span reads GT. Lysine 300 carries the post-translational modification N6-(pyridoxal phosphate)lysine. Threonine 332 lines the pyridoxal 5'-phosphate pocket.

The protein belongs to the class-III pyridoxal-phosphate-dependent aminotransferase family. Putrescine aminotransferase subfamily. Pyridoxal 5'-phosphate is required as a cofactor.

It carries out the reaction an alkane-alpha,omega-diamine + 2-oxoglutarate = an omega-aminoaldehyde + L-glutamate. It catalyses the reaction putrescine + 2-oxoglutarate = 1-pyrroline + L-glutamate + H2O. The enzyme catalyses cadaverine + 2-oxoglutarate = 5-aminopentanal + L-glutamate. It participates in amine and polyamine degradation; putrescine degradation; 4-aminobutanal from putrescine (transaminase route): step 1/1. In terms of biological role, catalyzes the aminotransferase reaction from putrescine to 2-oxoglutarate, leading to glutamate and 4-aminobutanal, which spontaneously cyclizes to form 1-pyrroline. This is the first step in one of two pathways for putrescine degradation, where putrescine is converted into 4-aminobutanoate (gamma-aminobutyrate or GABA) via 4-aminobutanal. Also functions as a cadaverine transaminase in a a L-lysine degradation pathway to succinate that proceeds via cadaverine, glutarate and L-2-hydroxyglutarate. The chain is Putrescine aminotransferase from Salmonella heidelberg (strain SL476).